Reading from the N-terminus, the 172-residue chain is MLFINITFACILAIRFYSLSISIRHEKALIAKGAIQYGKRNSTLLSIAHVAFYFAAIIEANKQNLSFNSTSQIGLAILIFAIAMLFYVIYELKEIWTVKIYILPEHQINRSFLFKYVRHPNYFLNIIPELIGLSLFCQAKYTALVGLPIYLLILAVRIKQEESAMSHLFPKS.

Transmembrane regions (helical) follow at residues Met1–Ile21, Asn41–Asn61, Gln72–Leu92, and Phe136–Val156.

Its subcellular location is the cell membrane. This is an uncharacterized protein from Haemophilus influenzae (strain ATCC 51907 / DSM 11121 / KW20 / Rd).